A 203-amino-acid polypeptide reads, in one-letter code: Holliday junction branch migration complex subunit RuvA (203 aa).

Residues 1-62 (MYEYFLGQVT…ENGMSLFGFF (62 aa)) form a domain I region. The tract at residues 63 to 141 (DADEKALFEK…DLNVDVTGQT (79 aa)) is domain II. The segment at 142 to 148 (ALDVDAP) is flexible linker. Positions 149–203 (AVDGALADALAALEALGYSKADVKKVTKKLETFSQTQGADTNTLLSEGLRLLMKK) are domain III.

Belongs to the RuvA family. In terms of assembly, homotetramer. Forms an RuvA(8)-RuvB(12)-Holliday junction (HJ) complex. HJ DNA is sandwiched between 2 RuvA tetramers; dsDNA enters through RuvA and exits via RuvB. An RuvB hexamer assembles on each DNA strand where it exits the tetramer. Each RuvB hexamer is contacted by two RuvA subunits (via domain III) on 2 adjacent RuvB subunits; this complex drives branch migration. In the full resolvosome a probable DNA-RuvA(4)-RuvB(12)-RuvC(2) complex forms which resolves the HJ.

It is found in the cytoplasm. In terms of biological role, the RuvA-RuvB-RuvC complex processes Holliday junction (HJ) DNA during genetic recombination and DNA repair, while the RuvA-RuvB complex plays an important role in the rescue of blocked DNA replication forks via replication fork reversal (RFR). RuvA specifically binds to HJ cruciform DNA, conferring on it an open structure. The RuvB hexamer acts as an ATP-dependent pump, pulling dsDNA into and through the RuvAB complex. HJ branch migration allows RuvC to scan DNA until it finds its consensus sequence, where it cleaves and resolves the cruciform DNA. This is Holliday junction branch migration complex subunit RuvA from Lactiplantibacillus plantarum (strain ATCC BAA-793 / NCIMB 8826 / WCFS1) (Lactobacillus plantarum).